The chain runs to 178 residues: Protein FAM89A (178 aa).

The protein belongs to the FAM89 family.

This chain is Protein FAM89A (FAM89A), found in Bos taurus (Bovine).